Reading from the N-terminus, the 67-residue chain is ATP synthase F(0) complex subunit 8 (67 aa).

A helical transmembrane segment spans residues 8-24 (PWFITILSMIITLFILF). Lys-54 bears the N6-acetyllysine; alternate mark. Position 54 is an N6-succinyllysine; alternate (Lys-54). An N6-acetyllysine modification is found at Lys-57.

This sequence belongs to the ATPase protein 8 family. As to quaternary structure, component of the ATP synthase complex composed at least of ATP5F1A/subunit alpha, ATP5F1B/subunit beta, ATP5MC1/subunit c (homooctomer), MT-ATP6/subunit a, MT-ATP8/subunit 8, ATP5ME/subunit e, ATP5MF/subunit f, ATP5MG/subunit g, ATP5MK/subunit k, ATP5MJ/subunit j, ATP5F1C/subunit gamma, ATP5F1D/subunit delta, ATP5F1E/subunit epsilon, ATP5PF/subunit F6, ATP5PB/subunit b, ATP5PD/subunit d, ATP5PO/subunit OSCP. ATP synthase complex consists of a soluble F(1) head domain (subunits alpha(3) and beta(3)) - the catalytic core - and a membrane F(0) domain - the membrane proton channel (subunits c, a, 8, e, f, g, k and j). These two domains are linked by a central stalk (subunits gamma, delta, and epsilon) rotating inside the F1 region and a stationary peripheral stalk (subunits F6, b, d, and OSCP). Interacts with PRICKLE3.

The protein localises to the mitochondrion membrane. Subunit 8, of the mitochondrial membrane ATP synthase complex (F(1)F(0) ATP synthase or Complex V) that produces ATP from ADP in the presence of a proton gradient across the membrane which is generated by electron transport complexes of the respiratory chain. ATP synthase complex consist of a soluble F(1) head domain - the catalytic core - and a membrane F(1) domain - the membrane proton channel. These two domains are linked by a central stalk rotating inside the F(1) region and a stationary peripheral stalk. During catalysis, ATP synthesis in the catalytic domain of F(1) is coupled via a rotary mechanism of the central stalk subunits to proton translocation. In vivo, can only synthesize ATP although its ATP hydrolase activity can be activated artificially in vitro. Part of the complex F(0) domain. This is ATP synthase F(0) complex subunit 8 from Orycteropus afer (Aardvark).